A 401-amino-acid polypeptide reads, in one-letter code: Mannonate dehydratase (401 aa).

Belongs to the mannonate dehydratase family. Fe(2+) serves as cofactor. It depends on Mn(2+) as a cofactor.

It carries out the reaction D-mannonate = 2-dehydro-3-deoxy-D-gluconate + H2O. Its pathway is carbohydrate metabolism; pentose and glucuronate interconversion. Catalyzes the dehydration of D-mannonate. The sequence is that of Mannonate dehydratase from Brucella melitensis biotype 2 (strain ATCC 23457).